The primary structure comprises 297 residues: Probable endonuclease 4 (297 aa).

Residues His-69, His-110, Glu-145, Asp-179, His-182, His-214, Asp-227, His-229, and Glu-259 each contribute to the Zn(2+) site.

The protein belongs to the AP endonuclease 2 family. The cofactor is Zn(2+).

The catalysed reaction is Endonucleolytic cleavage to 5'-phosphooligonucleotide end-products.. In terms of biological role, endonuclease IV plays a role in DNA repair. It cleaves phosphodiester bonds at apurinic or apyrimidinic (AP) sites, generating a 3'-hydroxyl group and a 5'-terminal sugar phosphate. This chain is Probable endonuclease 4, found in Listeria monocytogenes serotype 4b (strain F2365).